We begin with the raw amino-acid sequence, 277 residues long: Thymidylate synthase (277 aa).

DUMP is bound at residue Arg-21. His-51 contacts (6R)-5,10-methylene-5,6,7,8-tetrahydrofolate. 126 to 127 (RR) is a binding site for dUMP. The active-site Nucleophile is Cys-159. DUMP contacts are provided by residues 179 to 182 (RSAD), Asn-190, and 220 to 222 (HLY). Asp-182 contacts (6R)-5,10-methylene-5,6,7,8-tetrahydrofolate. Ala-276 is a (6R)-5,10-methylene-5,6,7,8-tetrahydrofolate binding site.

It belongs to the thymidylate synthase family. Bacterial-type ThyA subfamily. As to quaternary structure, homodimer.

It is found in the cytoplasm. It carries out the reaction dUMP + (6R)-5,10-methylene-5,6,7,8-tetrahydrofolate = 7,8-dihydrofolate + dTMP. It participates in pyrimidine metabolism; dTTP biosynthesis. Its function is as follows. Catalyzes the reductive methylation of 2'-deoxyuridine-5'-monophosphate (dUMP) to 2'-deoxythymidine-5'-monophosphate (dTMP) while utilizing 5,10-methylenetetrahydrofolate (mTHF) as the methyl donor and reductant in the reaction, yielding dihydrofolate (DHF) as a by-product. This enzymatic reaction provides an intracellular de novo source of dTMP, an essential precursor for DNA biosynthesis. This Thioalkalivibrio sulfidiphilus (strain HL-EbGR7) protein is Thymidylate synthase.